The primary structure comprises 203 residues: Small ribosomal subunit protein uS4 (203 aa).

One can recognise an S4 RNA-binding domain in the interval 93–153; it reads RRLDNVVYRL…EKSKNLQQVK (61 aa).

It belongs to the universal ribosomal protein uS4 family. Part of the 30S ribosomal subunit. Contacts protein S5. The interaction surface between S4 and S5 is involved in control of translational fidelity.

Functionally, one of the primary rRNA binding proteins, it binds directly to 16S rRNA where it nucleates assembly of the body of the 30S subunit. Its function is as follows. With S5 and S12 plays an important role in translational accuracy. The polypeptide is Small ribosomal subunit protein uS4 (Lactobacillus delbrueckii subsp. bulgaricus (strain ATCC 11842 / DSM 20081 / BCRC 10696 / JCM 1002 / NBRC 13953 / NCIMB 11778 / NCTC 12712 / WDCM 00102 / Lb 14)).